The primary structure comprises 333 residues: Acetyltransferase Pat (333 aa).

Residues 88–91 (GEIA), 98–99 (RS), and arginine 138 contribute to the 3',5'-cyclic AMP site. The region spanning 156 to 318 (LMLRPVLPGD…GELSLGREMV (163 aa)) is the N-acetyltransferase domain. Residue histidine 173 participates in substrate binding. Mg(2+) is bound at residue aspartate 214. Residues 238–240 (FTV), 246–251 (GRGIGS), asparagine 277, and arginine 286 each bind substrate.

As to quaternary structure, homodimer. It depends on Mg(2+) as a cofactor.

Autoinhibited and allosterically activated by 3,5-cyclic adenosine monophosphate (cAMP). An extensive conformational rearrangement relieves this autoinhibition by means of a substrate-mimicking lid that covers the protein-substrate binding surface. Functionally, catalyzes specifically the acetylation of the epsilon-amino group of a highly conserved lysine residue in acetyl-CoA synthetase (ACS). This acetylation results in the inactivation of ACS activity and could be important for mycobacteria to adjust to environmental changes. This chain is Acetyltransferase Pat, found in Mycobacterium tuberculosis (strain ATCC 25618 / H37Rv).